A 359-amino-acid polypeptide reads, in one-letter code: Membrane-bound lytic murein transglycosylase C (359 aa).

Residues methionine 1–serine 16 form the signal peptide. A lipid anchor (N-palmitoyl cysteine) is attached at cysteine 17. Cysteine 17 is lipidated: S-diacylglycerol cysteine.

Belongs to the transglycosylase Slt family.

It localises to the cell outer membrane. It carries out the reaction Exolytic cleavage of the (1-&gt;4)-beta-glycosidic linkage between N-acetylmuramic acid (MurNAc) and N-acetylglucosamine (GlcNAc) residues in peptidoglycan, from either the reducing or the non-reducing ends of the peptidoglycan chains, with concomitant formation of a 1,6-anhydrobond in the MurNAc residue.. Functionally, murein-degrading enzyme. May play a role in recycling of muropeptides during cell elongation and/or cell division. In Escherichia coli (strain SMS-3-5 / SECEC), this protein is Membrane-bound lytic murein transglycosylase C.